The chain runs to 232 residues: Ribonuclease P protein component 3 (232 aa).

This sequence belongs to the eukaryotic/archaeal RNase P protein component 3 family. Consists of a catalytic RNA component and at least 4-5 protein subunits.

It localises to the cytoplasm. The enzyme catalyses Endonucleolytic cleavage of RNA, removing 5'-extranucleotides from tRNA precursor.. Functionally, part of ribonuclease P, a protein complex that generates mature tRNA molecules by cleaving their 5'-ends. This is Ribonuclease P protein component 3 from Methanococcus maripaludis (strain C7 / ATCC BAA-1331).